An 898-amino-acid chain; its full sequence is Transportin-1 (898 aa).

20 HEAT repeats span residues 19–46 (GLQQ…QKLE), 51–89 (YPDF…AHFQ), 98–131 (FIKS…KGEL), 137–174 (LLPK…LDSD), 181–211 (NIMI…QFII), 224–251 (FIEN…VMLL), 263–290 (HNIV…FWLT), 306–397 (PKLI…LANV), 405–433 (HILP…GAIA), 445–472 (PELI…TLSR), 486–519 (LKPL…EEEA), 527–560 (LAYI…ADSV), 568–606 (EYIQ…TALQ), 614–665 (EPVY…GLGG), 676–707 (ILTL…KACF), 715–748 (ADFM…IQMG), 756–791 (PMVL…YVCP), 799–832 (QQFI…ISVN), 841–872 (IFFC…KNQV), and 875–895 (ENWR…LAAF). Residues 41-109 (VQQKLEQLNQ…KSECLNNIGD (69 aa)) form the Importin N-terminal domain. The disordered stretch occupies residues 347–374 (FHRSRTVAQQHEEDGIEEEDDDDDEIDD). A compositionally biased stretch (acidic residues) spans 360-374 (DGIEEEDDDDDEIDD).

It belongs to the importin beta family. Importin beta-2 subfamily. In terms of assembly, identified in a complex that contains TNPO1, RAN and RANBP1. Binds HNRPA1, HNRPA2, HNRNPDL, RPS7, RPL5 and RAN. Interacts with H2A, H2B, H3 and H4 histones. Interacts with isoform 1 and isoform 5 of ADAR/ADAR1 (via DRBM 3 domain). Interacts with SNAI1 (via zinc fingers); the interaction mediates SNAI1 nuclear import. Interacts with SNAI2 (via zinc fingers). Interacts with RPL23A (via BIB domain) and SRP19; this interaction is involved in RPL23A and SRP19 import into the nucleus. Interacts (via HEAT repeats 8-12) with BAP1 (via non-classical PY-NLS); this interaction is direct, is involved in BAP1 nuclear import and disrupts BAP1 homodimerization.

Its subcellular location is the cytoplasm. The protein localises to the nucleus. Functionally, functions in nuclear protein import as nuclear transport receptor. Serves as receptor for nuclear localization signals (NLS) in cargo substrates. May mediate docking of the importin/substrate complex to the nuclear pore complex (NPC) through binding to nucleoporin and the complex is subsequently translocated through the pore by an energy requiring, Ran-dependent mechanism. At the nucleoplasmic side of the NPC, Ran binds to the importin, the importin/substrate complex dissociates and importin is re-exported from the nucleus to the cytoplasm where GTP hydrolysis releases Ran. The directionality of nuclear import is thought to be conferred by an asymmetric distribution of the GTP- and GDP-bound forms of Ran between the cytoplasm and nucleus. Involved in nuclear import of M9-containing proteins. In vitro, binds directly to the M9 region of the heterogeneous nuclear ribonucleoproteins (hnRNP), A1 and A2 and mediates their nuclear import. Involved in hnRNP A1/A2 nuclear export. Mediates the nuclear import of ribosomal proteins RPL23A, RPS7 and RPL5. In vitro, mediates nuclear import of SRP19. Mediates the import of histones H2A, H2B, H3 and H4. Mediates nuclear import of ADAR/ADAR1 in a RanGTP-dependent manner. Main mediator of PR-DUB complex component BAP1 nuclear import; acts redundantly with the karyopherins KPNA1 and KPNA2. In Mus musculus (Mouse), this protein is Transportin-1 (Tnpo1).